Reading from the N-terminus, the 387-residue chain is Patatin group D-3 (387 aa).

A signal peptide spans 1 to 23 (MATTKSFLILIVMILATTSSTFA). A PNPLA domain is found at 32–230 (LSIDGGGIKG…TVADPALLSI (199 aa)). Residues 36–41 (GGGIKG) carry the GXGXXG motif. The GXSXG motif lies at 75–79 (GTSTG). Catalysis depends on S77, which acts as the Nucleophile. The N-linked (GlcNAc...) asparagine glycan is linked to N115. The active-site Proton acceptor is the D216. Residues 216–218 (DGA) carry the DGA/G motif. Residues 361-385 (ETYEEALKRFAKLLSDRKKLRANKA) adopt a coiled-coil conformation.

This sequence belongs to the patatin family. As to expression, tuber.

The protein localises to the vacuole. Its function is as follows. Probable lipolytic acyl hydrolase (LAH), an activity which is thought to be involved in the response of tubers to pathogens. The protein is Patatin group D-3 of Solanum tuberosum (Potato).